The following is a 105-amino-acid chain: Nitrogenase-stabilizing/protective protein NifW (105 aa).

It belongs to the NifW family. In terms of assembly, homotrimer; associates with NifD.

May protect the nitrogenase Fe-Mo protein from oxidative damage. The chain is Nitrogenase-stabilizing/protective protein NifW from Rhodospirillum centenum (strain ATCC 51521 / SW).